The sequence spans 175 residues: Viral interleukin-10 homolog (175 aa).

The first 19 residues, 1-19 (MLSVMVSSSLVLIVFFLGA), serve as a signal peptide directing secretion. 2 disulfide bridges follow: Cys-37/Cys-127 and Cys-81/Cys-132. Asn-151 carries an N-linked (GlcNAc...) asparagine; by host glycan.

This sequence belongs to the IL-10 family. As to quaternary structure, homodimer; disulfide-linked.

The protein localises to the secreted. Functional viral IL-10 homolog. Can bind to the human IL-10 receptor and compete with human IL-10 for binding sites. Requires both subunits of the human IL-10 receptor complex to induce signal transduction events and biological activities. IL-10 signaling pathway has several immunosuppressive activities that are exploited by the virus. Inhibits TLR-induced type I interferon production in host plasmacytoid dendritic cells. This is Viral interleukin-10 homolog (UL111A) from Human cytomegalovirus (strain AD169) (HHV-5).